The chain runs to 262 residues: Putative 1-acyl-sn-glycerol-3-phosphate acyltransferase acl-1 (262 aa).

Transmembrane regions (helical) follow at residues 3–23 (FLAI…PVIG), 29–49 (VYFG…SIPF), and 89–109 (IIIA…AWPV). Positions 94–99 (HQSALD) match the HXXXXD motif motif.

This sequence belongs to the 1-acyl-sn-glycerol-3-phosphate acyltransferase family.

The protein resides in the membrane. The catalysed reaction is a 1-acyl-sn-glycero-3-phosphate + an acyl-CoA = a 1,2-diacyl-sn-glycero-3-phosphate + CoA. Its pathway is phospholipid metabolism; CDP-diacylglycerol biosynthesis; CDP-diacylglycerol from sn-glycerol 3-phosphate: step 2/3. Functionally, converts lysophosphatidic acid (LPA) into phosphatidic acid by incorporating an acyl moiety at the sn-2 position of the glycerol backbone. The chain is Putative 1-acyl-sn-glycerol-3-phosphate acyltransferase acl-1 (acl-1) from Caenorhabditis elegans.